The following is an 82-amino-acid chain: Transcription elongation factor 1 homolog (82 aa).

The Zn(2+) site is built by C26, C29, C50, and C53.

This sequence belongs to the ELOF1 family.

Its subcellular location is the nucleus. Functionally, transcription elongation factor implicated in the maintenance of proper chromatin structure in actively transcribed regions. This Manduca sexta (Tobacco hawkmoth) protein is Transcription elongation factor 1 homolog.